The following is a 242-amino-acid chain: Type III pantothenate kinase (242 aa).

7-14 contributes to the ATP binding site; the sequence is DLGNSRFK. Residues tyrosine 91 and 98 to 101 each bind substrate; that span reads GVDR. The active-site Proton acceptor is aspartate 100. Residue threonine 121 participates in ATP binding. Residue threonine 171 participates in substrate binding.

It belongs to the type III pantothenate kinase family. Homodimer. NH4(+) is required as a cofactor. It depends on K(+) as a cofactor.

Its subcellular location is the cytoplasm. The enzyme catalyses (R)-pantothenate + ATP = (R)-4'-phosphopantothenate + ADP + H(+). Its pathway is cofactor biosynthesis; coenzyme A biosynthesis; CoA from (R)-pantothenate: step 1/5. Functionally, catalyzes the phosphorylation of pantothenate (Pan), the first step in CoA biosynthesis. This chain is Type III pantothenate kinase, found in Xanthomonas oryzae pv. oryzae (strain MAFF 311018).